A 138-amino-acid polypeptide reads, in one-letter code: MNNKFYQLTVISAENFIFSNLVKKSNITGSEGNLGILPGHAPLITKIKPGLIHIISSKNIEEYIYLSGGILEINSNVVTVLADTAIRGKEIDEKKAIESKKNAEELILKSKERHEYIRAVIELSKAIAKLRVCKLSNK.

Belongs to the ATPase epsilon chain family. In terms of assembly, F-type ATPases have 2 components, CF(1) - the catalytic core - and CF(0) - the membrane proton channel. CF(1) has five subunits: alpha(3), beta(3), gamma(1), delta(1), epsilon(1). CF(0) has three main subunits: a, b and c.

The protein localises to the cell inner membrane. Functionally, produces ATP from ADP in the presence of a proton gradient across the membrane. The sequence is that of ATP synthase epsilon chain from Wigglesworthia glossinidia brevipalpis.